Consider the following 525-residue polypeptide: 2,3-bisphosphoglycerate-independent phosphoglycerate mutase 2 (525 aa).

Residues Asp-14 and Ser-64 each contribute to the Mn(2+) site. The Phosphoserine intermediate role is filled by Ser-64. Substrate is bound by residues His-125, 155 to 156 (RD), Arg-187, Arg-193, 274 to 277 (RADR), and Lys-347. Residues Asp-414, His-418, Asp-455, His-456, and His-474 each contribute to the Mn(2+) site.

Belongs to the BPG-independent phosphoglycerate mutase family. Requires Mn(2+) as cofactor.

It carries out the reaction (2R)-2-phosphoglycerate = (2R)-3-phosphoglycerate. The protein operates within carbohydrate degradation; glycolysis; pyruvate from D-glyceraldehyde 3-phosphate: step 3/5. Functionally, catalyzes the interconversion of 2-phosphoglycerate and 3-phosphoglycerate. The protein is 2,3-bisphosphoglycerate-independent phosphoglycerate mutase 2 of Methanosarcina barkeri (strain Fusaro / DSM 804).